Consider the following 108-residue polypeptide: Parvalbumin beta 1 (108 aa).

A1 carries the post-translational modification N-acetylalanine. 2 consecutive EF-hand domains span residues 38–73 (KXXD…FCPK) and 77–108 (LTDA…LVKQ). Positions 51, 53, 55, 57, 59, 62, 90, 92, 94, 96, and 101 each coordinate Ca(2+).

It belongs to the parvalbumin family.

Functionally, in muscle, parvalbumin is thought to be involved in relaxation after contraction. It binds two calcium ions. The chain is Parvalbumin beta 1 from Oncorhynchus mykiss (Rainbow trout).